The chain runs to 532 residues: E3 ubiquitin-protein ligase rnf8-B (532 aa).

The region spanning 30 to 84 (VTMGRGLGVTYQLKPTLCPLMISRTHCLFKQNARDEWTVTDNKSLNGVWRNKERL) is the FHA domain. The disordered stretch occupies residues 127–209 (SLIRPLPGKT…VETDTVSPTQ (83 aa)). Residues 169-178 (VSRDGEDSAK) are compositionally biased toward basic and acidic residues. The RING-type zinc-finger motif lies at 377-415 (CIICSEHFIEAVTLNCAHSFCSYCIKSWRKRKEECPICR).

This sequence belongs to the RNF8 family. In terms of assembly, homodimer. Forms a E2-E3 ubiquitin ligase complex composed of the rnf8 homodimer and a E2 heterodimer of ube2n and ube2v2.

Its subcellular location is the nucleus. The catalysed reaction is S-ubiquitinyl-[E2 ubiquitin-conjugating enzyme]-L-cysteine + [acceptor protein]-L-lysine = [E2 ubiquitin-conjugating enzyme]-L-cysteine + N(6)-ubiquitinyl-[acceptor protein]-L-lysine.. It participates in protein modification; protein ubiquitination. Its function is as follows. E3 ubiquitin-protein ligase that plays a key role in DNA damage signaling via 2 distinct roles: by mediating the 'Lys-63'-linked ubiquitination of histones H2A and H2AX and promoting the recruitment of DNA repair proteins at double-strand breaks (DSBs) sites, and by catalyzing 'Lys-48'-linked ubiquitination to remove target proteins from DNA damage sites. Following DNA DSBs, it is recruited to the sites of damage by ATM-phosphorylated mdc1 and catalyzes the 'Lys-63'-linked ubiquitination of histones H2A and H2AX, thereby promoting the formation of tp53bp1 and brca1 ionizing radiation-induced foci (IRIF). H2A ubiquitination also mediates the ATM-dependent transcriptional silencing at regions flanking DSBs in cis, a mechanism to avoid collision between transcription and repair intermediates. Also catalyzes the formation of 'Lys-48'-linked polyubiquitin chains, leading to degradation of substrate proteins. In addition to its function in damage signaling, also plays a role in higher-order chromatin structure by mediating extensive chromatin decondensation. This Xenopus laevis (African clawed frog) protein is E3 ubiquitin-protein ligase rnf8-B.